Consider the following 348-residue polypeptide: MTIEVRNIVKEFGSFRALDNVDLRVETGELMALLGPSGSGKTTLLRIIAGLEWPDSGVVTIDGEDALAHGAAERHVGFVFQHYALFRHMNVFENVAFGLRVQPRKIRKSEAEIKKRVGDLLDLVQLGWLADRYPNQLSGGQRQRIALARALAIEPRILLLDEPFGALDAKVRKELRAWLRNLHEEIHVTSIFVTHDQEEALEVANRVVVMDKGRIEQIGSPGDVYERPASAFVHGFIGESIVLPVEVRDGRVRLGDRDLDLGAQDAAAGPSKLFVRRHDVTVGPSGSGVFEGAVKAVRAFGPMQRADIVLNDLGSDTLIEIDAPRDHSLKVGDRIGLQPQRYRIFADR.

Positions 3-237 (IEVRNIVKEF…PASAFVHGFI (235 aa)) constitute an ABC transporter domain. An ATP-binding site is contributed by 35–42 (GPSGSGKT).

Belongs to the ABC transporter superfamily. Sulfate/tungstate importer (TC 3.A.1.6) family. In terms of assembly, the complex is composed of two ATP-binding proteins (CysA), two transmembrane proteins (CysT and CysW) and a solute-binding protein (CysP).

The protein localises to the cell inner membrane. It catalyses the reaction sulfate(out) + ATP + H2O = sulfate(in) + ADP + phosphate + H(+). The catalysed reaction is thiosulfate(out) + ATP + H2O = thiosulfate(in) + ADP + phosphate + H(+). In terms of biological role, part of the ABC transporter complex CysAWTP involved in sulfate/thiosulfate import. Responsible for energy coupling to the transport system. The chain is Sulfate/thiosulfate import ATP-binding protein CysA from Rhodopseudomonas palustris (strain ATCC BAA-98 / CGA009).